The sequence spans 277 residues: Phosphate import ATP-binding protein PstB (277 aa).

The ABC transporter domain occupies 31–272 (IEVPGLSLYY…PAKKQTEDYI (242 aa)). Position 63 to 70 (63 to 70 (GPSGCGKS)) interacts with ATP.

The protein belongs to the ABC transporter superfamily. Phosphate importer (TC 3.A.1.7) family. In terms of assembly, the complex is composed of two ATP-binding proteins (PstB), two transmembrane proteins (PstC and PstA) and a solute-binding protein (PstS).

The protein localises to the cell inner membrane. It carries out the reaction phosphate(out) + ATP + H2O = ADP + 2 phosphate(in) + H(+). Part of the ABC transporter complex PstSACB involved in phosphate import. Responsible for energy coupling to the transport system. In Pseudomonas fluorescens (strain ATCC BAA-477 / NRRL B-23932 / Pf-5), this protein is Phosphate import ATP-binding protein PstB.